Reading from the N-terminus, the 373-residue chain is Glutamate 5-kinase 2 (373 aa).

An ATP-binding site is contributed by Lys-11. Substrate contacts are provided by Ser-51, Asp-138, and Asn-150. ATP contacts are provided by residues 170–171 and 212–218; these read SD and TGGMKSK. The region spanning 279–355 is the PUA domain; that stretch reads EGDIVVHNES…TNQETAASSQ (77 aa).

Belongs to the glutamate 5-kinase family.

Its subcellular location is the cytoplasm. It catalyses the reaction L-glutamate + ATP = L-glutamyl 5-phosphate + ADP. Its pathway is amino-acid biosynthesis; L-proline biosynthesis; L-glutamate 5-semialdehyde from L-glutamate: step 1/2. Catalyzes the transfer of a phosphate group to glutamate to form L-glutamate 5-phosphate. The chain is Glutamate 5-kinase 2 from Bacillus licheniformis (strain ATCC 14580 / DSM 13 / JCM 2505 / CCUG 7422 / NBRC 12200 / NCIMB 9375 / NCTC 10341 / NRRL NRS-1264 / Gibson 46).